The chain runs to 84 residues: Putative defensin-like protein 101 (84 aa).

Residues M1 to A27 form the signal peptide. 4 cysteine pairs are disulfide-bonded: C39-C81, C43-C67, C52-C79, and C56-C80.

The protein belongs to the DEFL family.

The protein localises to the secreted. In Arabidopsis thaliana (Mouse-ear cress), this protein is Putative defensin-like protein 101.